Here is a 2761-residue protein sequence, read N- to C-terminus: MSFSFEVSVIVTGLSSLKLKTRNDSLDNLNLLLKTSPTEVPVKAFSPILDAIITIIESEKTRYEKTRLENGKDARIELYENRLGSAAYTLRLFVERNCERFKPKHIKLLSMTLFELMTRPRSRSLITSVADHLTYSLVALCGSPVFQCNFELHQWISLSHDISDAVTYHLDVSYNDKIIANLLQTLLELFQIDTIGIEDIATPVVRMTIKYLTLITKENTNTRTILTLVNSAILRLHLIRFQDVINLSYYTIKHLLRIKLTNENNIGEIARFNLMISEVLYNKTPIIVGEDKDQSYVNKEKLLPALQDYLIHSLKQYDHTKFTLDCVTFIDGPASSKFNWYSFSDICQNEKNCLEDIWLYALSLTMMLKANYQFLEYKESSLAGGSLLFKRRKVKDTFAHMLKDSLTYDDFLCNCIDSDSIKIKTTGLHIGLLYLSIFDCSNIELSHLKEELFRCSQDVRFMLLCLSCFIPMCSQSKNSFSPEEEIRLFKMCVPLLKTSNGCKTACSLLYKLIEFQLEPIKDKSVLQQMSDLYLLSDVNGPALVCNESFKFWMHLHYYAKTFQTVKSPITYVFSWLYARWDQLFTLVVSETHFYVFASWLCGCTHTTFPTFEYSRPSLFHDTWMGLSEERASITGFSLTIRTIELRKQKFAPVFCEEAERVRFMYKLFDLIDESAISATFIDRAIQVLRTIESLVGQRNYTDYLSRFKEIFLLSSSVIDFGQNAQIFSVMEGMISLKDSLLRHIIMDILPTEKVLSTFMQRLAEHTQQTSHQDEFLSHHAKPEAGSIPISEMIEIGFEFALQVHSVSKAFDPLSSFILYSKKLSLPMLNRTLPNLITYLENNENEIPTASLERLTQFLGSSLLAPSFDTSSTSMKLLTRYLEGISKYWVMEDRSQVLTADCNDIFDWIVTQYDESSFSGVEALYELARFMTLLLEKYNLSNSSISGGKQRVFKILSGCITRLPKYLTNRVVSLLGTYVKRVGVTNQRILFKELLQRFNPPQESVETAAFFSLTCTKLSLINEFYLLNSILHLLDNTNFSHLLLYVEKSLDTISTFYGLCSKQDLFHQCRYFIIDQWFTKSAKSKIYEPSIWKVELFEFEFDEFCIRYQMELTSFFFAKSSTYYYIIDHLKKLLNLKQEALLTKYIAPTIALSYVDSGVKDLIFDIAADLLGRKFPNVLTINLDDVIYYFIKLSDLSNLATSLTFWCKIFNSSRFTNMLHYNSSNCMQLNDNVAIAFPIVYKVLKKNVFTDIDDGRSFEYVIQRLVMDLQNCVLIDQKIRVLRQIKLLVLFFEHKLTLFKDIDFFLLELSKFLFNADIFSEVYGFILDLLEFSANNKMDVARSLTELMRFCFTVTDSNVKKTLFPKVNPVLFNFCVSDGKQLYATCYALLTLETNSFGWNDIAQVFKFQEVDRTSVSLLSDLFDNFDYDGSFDANLISPTTIQNLISIPRDNARVSDKFRRWLGNILGEIVYTRPYDHIIPHHCSTLDLESGISGLLQILWVQYQKADDISLRFLLDHIQSIILQDESVLAEISSDSYSSLVNLKNLTDISWEKFENCHGMLNIKLGETFLTLTFTDRSCHYQKWISAFICNILLVIVEKFPSFRILALLCDNTAFLHSAIISQLIKILLVSFPKQRSSFLSDILNRADEIFKTEDRTLKMEVITKVFSIIRGMALNGVQNALYVYDKIKLQPVIPIMLSLGSEIWSLMIYEEFYGEYCTGKMLDYELLYQIYSKIDEKDLFYGLPLSSSLASSLTLISKTKFNSYTNFALSNGRFEEGLRNKDSSCLHEFASVTSSNGFTGLATMLDSNFENPLLSANQYSWALKLNKWDLPIPEARDSFAKSAFSILKDVKEIPDFFSFDDHILKVMDGGSLLKNSQLNLETMESLGLLVSLKKLGSADMNTLTTLNNLRVHDTLNADYLPENVFDILHWSRHFFIESKINNTSVIEHAPGSNFTLQLAKILNLVHASTFCRDQGRFQDLINIVMTLEAAVDDITNNPAIGPSDTITLFCKRISTVESARMLWANKESAMAINMLEDLLQTNLTAVNVENVSLADVQDILMPDAVVDSQLVEWSSFSRHRSPDVIFNDHILYYERDVLNINEPNLRSSICYTYAEFCYKQSQKVDEGELLYLKQKIAKASNQLQEISSIYKNPKLRDAERKEAKRHHNRLSLQNHHDKDRYNKISSSRIAFVSQALHFFLTTLVHSNSRDAEVVDKFCSLWFSYSTDDIINSKLQKEIGTVPSFKFLPWVSQMASKLADSVSPFQDTLQLTLKRMLYKLPYETLYPLISMSLQDSESKVIDPVTKSRVEVVNKIIAALDMYDSGRYGSQFTRPVQAFCSMSVALACHKIPPKMKFLQLDTLNIGKYWLETLPKVHLPLPTLPVKITCSQDGRREGRSYISSIDPKVLISSSGLSLPKIATFTVSDGTRHRVLLKGSNDDLRQDAIMEQVFKQVNKILKANKTTRKQNLSVRTYEVIPLGPRAGLIEFVANSMSLHDILLNLHCNDEISFDKARKTMKAAQNHSVEERVLTFSRITEKIKPQLRRFFFQSFVHAHDWYESRNRYTKSVVTSSIVGYLLGLGDRHLNNILIDIKTGEPIHIDLGVAFDQGKLLPIPELVPFRLTRDIVDGFGVAGIEGLFRNNCERVFKVLQDEKERLLCVLNVLKWDPLYSWKMTPLKKQRLQAKFTGDYDEEEISVSDADFSELLEEDNNNDESIRALKGVESKLYGDGLSVEAIVQELLSSATDKQNLATIYMGWSPFY.

The FAT domain occupies Pro-1692–Gln-2294. Residues Asp-2404 to Asn-2710 form the PI3K/PI4K catalytic domain. Residues Ser-2410–Leu-2416 form a G-loop region. Residues Gly-2579–Asn-2587 are catalytic loop. Positions His-2599 to Thr-2623 are activation loop. The region spanning Asp-2729 to Tyr-2761 is the FATC domain.

It belongs to the PI3/PI4-kinase family. ATM subfamily. Associates with DNA double-strand breaks.

The protein resides in the nucleus. It localises to the chromosome. The protein localises to the telomere. It carries out the reaction L-seryl-[protein] + ATP = O-phospho-L-seryl-[protein] + ADP + H(+). The catalysed reaction is L-threonyl-[protein] + ATP = O-phospho-L-threonyl-[protein] + ADP + H(+). Serine/threonine protein kinase which activates checkpoint signaling upon genotoxic stresses such as ionizing radiation (IR), ultraviolet light (UV), or DNA replication stalling, thereby acting as a DNA damage sensor. Recognizes the substrate consensus sequence [ST]-Q. Phosphorylates histone H2A to form H2AS128ph (gamma-H2A) at sites of DNA damage, involved in the regulation of DNA damage response mechanism. Required for the control of telomere length and genome stability. This chain is Serine/threonine-protein kinase TEL1 (TEL1), found in Kluyveromyces lactis (strain ATCC 8585 / CBS 2359 / DSM 70799 / NBRC 1267 / NRRL Y-1140 / WM37) (Yeast).